Consider the following 304-residue polypeptide: D-alanine--D-alanine ligase (304 aa).

Residues 103–301 (KQVWLALGLP…FDDLVWRILE (199 aa)) form the ATP-grasp domain. 132-187 (VEMLGFPVIIKPAKEGSSVGVSRVFALEHLEEAVALAARYEGELLMEQLIEGDELT) is an ATP binding site. Mg(2+) is bound by residues D254, E268, and N270.

The protein belongs to the D-alanine--D-alanine ligase family. Mg(2+) serves as cofactor. Mn(2+) is required as a cofactor.

Its subcellular location is the cytoplasm. It catalyses the reaction 2 D-alanine + ATP = D-alanyl-D-alanine + ADP + phosphate + H(+). It participates in cell wall biogenesis; peptidoglycan biosynthesis. Its function is as follows. Cell wall formation. This Xylella fastidiosa (strain Temecula1 / ATCC 700964) protein is D-alanine--D-alanine ligase.